The chain runs to 142 residues: Large ribosomal subunit protein uL13 (142 aa).

This sequence belongs to the universal ribosomal protein uL13 family. As to quaternary structure, part of the 50S ribosomal subunit.

In terms of biological role, this protein is one of the early assembly proteins of the 50S ribosomal subunit, although it is not seen to bind rRNA by itself. It is important during the early stages of 50S assembly. In Photorhabdus laumondii subsp. laumondii (strain DSM 15139 / CIP 105565 / TT01) (Photorhabdus luminescens subsp. laumondii), this protein is Large ribosomal subunit protein uL13.